The following is a 214-amino-acid chain: MAEEVPSLNIEEWKPRTSIGSLVKEGKISSIKELFDRNLPITEPEIVDVLLPKLKYEVVDIKVVQKQTDAGEISRYKVLVIMGNMDGYVSIGTGKAKQLRVAIQKAIRDAKMNIIPVRRGCGSWQCTCGEPHSLPFKVVGKAGSVEVDLLPAPKGTGLVVGSVLKTLLTYAGIKDAWSTTKGETRTTENFVRAGYSALYNTYKFVTLQDWVRKR.

Residues 54-117 (LKYEVVDIKV…RDAKMNIIPV (64 aa)) enclose the S5 DRBM domain.

Belongs to the universal ribosomal protein uS5 family. Part of the 30S ribosomal subunit. Contacts protein S4.

With S4 and S12 plays an important role in translational accuracy. The chain is Small ribosomal subunit protein uS5 from Saccharolobus solfataricus (strain ATCC 35092 / DSM 1617 / JCM 11322 / P2) (Sulfolobus solfataricus).